The chain runs to 127 residues: Large ribosomal subunit protein bL19 (127 aa).

The protein belongs to the bacterial ribosomal protein bL19 family.

Functionally, this protein is located at the 30S-50S ribosomal subunit interface and may play a role in the structure and function of the aminoacyl-tRNA binding site. The polypeptide is Large ribosomal subunit protein bL19 (Ruegeria pomeroyi (strain ATCC 700808 / DSM 15171 / DSS-3) (Silicibacter pomeroyi)).